A 147-amino-acid polypeptide reads, in one-letter code: Hemoglobin subunit epsilon-2 (147 aa).

A Globin domain is found at 3-147 (HFTTEENVAV…VANALTHKYH (145 aa)). Tyr64 and His93 together coordinate heme b.

This sequence belongs to the globin family. In terms of tissue distribution, red blood cells.

Functionally, hemoglobin epsilon chain is a beta-type chain found in early embryos. The sequence is that of Hemoglobin subunit epsilon-2 (HBE2) from Bos taurus (Bovine).